The following is a 231-amino-acid chain: MIGAVLKTLEYFDEKDVKVITTGDIGEGDGSLKIYDALKEIDDDLVIIHYIKPKISKIREINFSPKIIADAGGMYAAKAANIGDKFYLFLPDVGELAFLADEKASHPAYVRGFISEIDDNEVPKLIERDYKLKMPKYMVVKGETDYTIREEKIIDKIKEPKIKAMECIGGTGDTLTEIVSSLISVDFKTEEALSLGCKINRKLGEIANVNPNTQITEIINAIPKALENTLK.

This is an uncharacterized protein from Methanocaldococcus jannaschii (strain ATCC 43067 / DSM 2661 / JAL-1 / JCM 10045 / NBRC 100440) (Methanococcus jannaschii).